A 312-amino-acid chain; its full sequence is ECF RNA polymerase sigma factor SigJ (312 aa).

A sigma-70 factor domain-2 region spans residues 6-65 (FEALRQHLMSVAYRLTGTVADAEDIVQEAWLRWDSPDTVIADPRAWLTTVVSRLGLDKLR). The Polymerase core binding signature appears at 29-32 (DIVQ). The tract at residues 107–155 (MVVLERLRPDQRVAFVLHDGFAVPFAEVAEVLGTSEAAARQLASRARKA) is sigma-70 factor domain-4. The segment at residues 131–150 (FAEVAEVLGTSEAAARQLAS) is a DNA-binding region (H-T-H motif). The disordered stretch occupies residues 293–312 (GSPLKERRAQPTGRGRHHRN).

This sequence belongs to the sigma-70 factor family. ECF subfamily. In terms of assembly, interacts transiently with the RNA polymerase catalytic core formed by RpoA, RpoB, RpoC and RpoZ (2 alpha, 1 beta, 1 beta' and 1 omega subunit) to form the RNA polymerase holoenzyme that can initiate transcription.

Sigma factors are initiation factors that promote the attachment of RNA polymerase to specific initiation sites and are then released. Extracytoplasmic function (ECF) sigma factors are held in an inactive form by an anti-sigma factor until released, although no anti-sigma factor is known for this protein. Regulates the promoter of SigI, may not be autoregulated. The polypeptide is ECF RNA polymerase sigma factor SigJ (sigJ) (Mycobacterium tuberculosis (strain ATCC 25618 / H37Rv)).